A 183-amino-acid chain; its full sequence is ATP synthase subunit delta (183 aa).

This sequence belongs to the ATPase delta chain family. As to quaternary structure, F-type ATPases have 2 components, F(1) - the catalytic core - and F(0) - the membrane proton channel. F(1) has five subunits: alpha(3), beta(3), gamma(1), delta(1), epsilon(1). F(0) has three main subunits: a(1), b(2) and c(10-14). The alpha and beta chains form an alternating ring which encloses part of the gamma chain. F(1) is attached to F(0) by a central stalk formed by the gamma and epsilon chains, while a peripheral stalk is formed by the delta and b chains.

It is found in the cell inner membrane. Functionally, f(1)F(0) ATP synthase produces ATP from ADP in the presence of a proton or sodium gradient. F-type ATPases consist of two structural domains, F(1) containing the extramembraneous catalytic core and F(0) containing the membrane proton channel, linked together by a central stalk and a peripheral stalk. During catalysis, ATP synthesis in the catalytic domain of F(1) is coupled via a rotary mechanism of the central stalk subunits to proton translocation. Its function is as follows. This protein is part of the stalk that links CF(0) to CF(1). It either transmits conformational changes from CF(0) to CF(1) or is implicated in proton conduction. The protein is ATP synthase subunit delta of Rickettsia prowazekii (strain Madrid E).